Consider the following 257-residue polypeptide: Deoxyribose-phosphate aldolase (257 aa).

The Proton donor/acceptor role is filled by Asp-102. Lys-166 (schiff-base intermediate with acetaldehyde) is an active-site residue. Lys-198 functions as the Proton donor/acceptor in the catalytic mechanism.

Belongs to the DeoC/FbaB aldolase family. DeoC type 2 subfamily.

It is found in the cytoplasm. It catalyses the reaction 2-deoxy-D-ribose 5-phosphate = D-glyceraldehyde 3-phosphate + acetaldehyde. It functions in the pathway carbohydrate degradation; 2-deoxy-D-ribose 1-phosphate degradation; D-glyceraldehyde 3-phosphate and acetaldehyde from 2-deoxy-alpha-D-ribose 1-phosphate: step 2/2. Catalyzes a reversible aldol reaction between acetaldehyde and D-glyceraldehyde 3-phosphate to generate 2-deoxy-D-ribose 5-phosphate. The chain is Deoxyribose-phosphate aldolase from Shewanella loihica (strain ATCC BAA-1088 / PV-4).